Reading from the N-terminus, the 82-residue chain is uncharacterized protein (82 aa).

This is an uncharacterized protein from Orgyia pseudotsugata multicapsid polyhedrosis virus (OpMNPV).